The following is a 315-amino-acid chain: Methenyltetrahydromethanopterin cyclohydrolase (315 aa).

Belongs to the MCH family.

It is found in the cytoplasm. It catalyses the reaction 5,10-methenyl-5,6,7,8-tetrahydromethanopterin + H2O = N(5)-formyl-5,6,7,8-tetrahydromethanopterin + H(+). The protein operates within one-carbon metabolism; methanogenesis from CO(2); 5,10-methenyl-5,6,7,8-tetrahydromethanopterin from CO(2): step 3/3. Functionally, catalyzes the reversible interconversion of 5-formyl-H(4)MPT to methenyl-H(4)MPT(+). The polypeptide is Methenyltetrahydromethanopterin cyclohydrolase (Methanosphaerula palustris (strain ATCC BAA-1556 / DSM 19958 / E1-9c)).